Here is a 248-residue protein sequence, read N- to C-terminus: tRNA (guanine-N(1)-)-methyltransferase (248 aa).

Residues Gly116 and Val136 to Leu141 contribute to the S-adenosyl-L-methionine site.

Belongs to the RNA methyltransferase TrmD family. In terms of assembly, homodimer.

It localises to the cytoplasm. The enzyme catalyses guanosine(37) in tRNA + S-adenosyl-L-methionine = N(1)-methylguanosine(37) in tRNA + S-adenosyl-L-homocysteine + H(+). Its function is as follows. Specifically methylates guanosine-37 in various tRNAs. The sequence is that of tRNA (guanine-N(1)-)-methyltransferase from Psychromonas ingrahamii (strain DSM 17664 / CCUG 51855 / 37).